The chain runs to 829 residues: Transmembrane protease serine 7 (829 aa).

Residues 1-62 (MDKEKSDPSC…RAPFWNVQNK (62 aa)) lie on the Cytoplasmic side of the membrane. The disordered stretch occupies residues 26-52 (SVPGKLPGRRPPRKPIGKPRPRKQPKK). The span at 32–52 (PGRRPPRKPIGKPRPRKQPKK) shows a compositional bias: basic residues. A helical; Signal-anchor for type II membrane protein transmembrane segment spans residues 63–83 (IILFTVFLFILAVTAWTLLWL). The Extracellular portion of the chain corresponds to 84 to 829 (YISKTESKDA…WIHKYVPSLL (746 aa)). Residues 92-220 (DAFYFVGMFR…DSVVLNAGLR (129 aa)) enclose the SEA domain. Disulfide bonds link Cys233/Cys259, Cys285/Cys308, and Cys351/Cys382. CUB domains are found at residues 233–346 (CSRY…FEVI) and 351–467 (CEST…YNIS). Asn401 and Asn465 each carry an N-linked (GlcNAc...) asparagine glycan. 3 LDL-receptor class A domains span residues 469-505 (PCPA…LFCV), 503-540 (FCVT…QNCT), and 544-581 (PCTS…EGCG). 9 cysteine pairs are disulfide-bonded: Cys470–Cys482, Cys477–Cys495, Cys489–Cys504, Cys511–Cys530, Cys524–Cys539, Cys545–Cys557, Cys552–Cys571, Cys565–Cys580, and Cys617–Cys633. A Peptidase S1 domain is found at 592–826 (IVGGSDSQEG…FVPWIHKYVP (235 aa)). Catalysis depends on charge relay system residues His632 and Asp680. 3 disulfides stabilise this stretch: Cys716/Cys782, Cys748/Cys761, and Cys772/Cys802. Catalysis depends on Ser776, which acts as the Charge relay system.

Belongs to the peptidase S1 family. As to quaternary structure, forms a heterodimer with SERPINA5. In terms of processing, N-glycosylated. In terms of tissue distribution, expressed in brain, eye, testis, skin, epididymis and salivary gland with lower levels in heart, skeletal muscle, thymus, ovary, prostate and uterus.

Its subcellular location is the cell membrane. Serine protease which preferentially hydrolyzes peptides with Arg at the P1 position. This is Transmembrane protease serine 7 (Tmprss7) from Mus musculus (Mouse).